The sequence spans 201 residues: Large ribosomal subunit protein bL25 (201 aa).

This sequence belongs to the bacterial ribosomal protein bL25 family. CTC subfamily. As to quaternary structure, part of the 50S ribosomal subunit; part of the 5S rRNA/L5/L18/L25 subcomplex. Contacts the 5S rRNA. Binds to the 5S rRNA independently of L5 and L18.

Functionally, this is one of the proteins that binds to the 5S RNA in the ribosome where it forms part of the central protuberance. The chain is Large ribosomal subunit protein bL25 from Thiobacillus denitrificans (strain ATCC 25259 / T1).